A 408-amino-acid chain; its full sequence is DNA polymerase processivity factor (408 aa).

The short motif at 344–353 is the Nuclear localization signal element; that stretch reads KKRRNLLTKR.

Belongs to the herpesviridae DNA polymerase processivity factor family. As to quaternary structure, interacts with the DNA polymerase catalytic subunit. Interacts with the origin-binding protein.

The protein resides in the host nucleus. In terms of biological role, plays an essential role in viral DNA replication by acting as the polymerase accessory subunit. Associates with the viral polymerase to increase its processivity and forms high-affinity direct interactions with DNA. Facilitates the origin-binding protein loading onto DNA thus increasing its ability to assemble into a functional complex capable of unwinding duplex DNA. The polypeptide is DNA polymerase processivity factor (Varicella-zoster virus (strain Dumas) (HHV-3)).